The sequence spans 188 residues: Mitochondrial import inner membrane translocase subunit Tim23B (188 aa).

A run of 2 helical transmembrane segments spans residues 73–93 (FELA…FGAM) and 125–145 (ALWA…GVII).

This sequence belongs to the Tim17/Tim22/Tim23 family.

The protein resides in the mitochondrion inner membrane. In terms of biological role, may participate in the translocation of transit peptide-containing proteins across the mitochondrial inner membrane. the PAM complex. The protein is Mitochondrial import inner membrane translocase subunit Tim23B of Homo sapiens (Human).